A 567-amino-acid polypeptide reads, in one-letter code: Sporulation-specific protein 5 (567 aa).

The span at 1 to 18 (MNGIITPQKQKQLMSSPS) shows a compositional bias: polar residues. Disordered regions lie at residues 1–39 (MNGI…VDVN) and 52–76 (ILLT…KKPN). A compositionally biased stretch (low complexity) spans 21–35 (PLSTTELSTPTSQTT). Residues 56–66 (PGTSPNATPGS) are compositionally biased toward polar residues. RRM domains are found at residues 296–380 (RNVY…SLQD) and 384–462 (TNLY…FADS).

Its subcellular location is the cytoplasm. Functionally, RNA-binding protein which plays a role in sporulation. Regulates the progression of meiosis I and may function in the vicinity of the Mei2 dot. This Schizosaccharomyces pombe (strain 972 / ATCC 24843) (Fission yeast) protein is Sporulation-specific protein 5 (spo5).